The following is a 76-amino-acid chain: Sulfur carrier protein TusA (76 aa).

Cys14 (cysteine persulfide intermediate) is an active-site residue.

The protein belongs to the sulfur carrier protein TusA family. In terms of assembly, interacts with IscS.

It is found in the cytoplasm. Its pathway is tRNA modification. In terms of biological role, sulfur carrier protein involved in sulfur trafficking in the cell. Part of a sulfur-relay system required for 2-thiolation during synthesis of 2-thiouridine of the modified wobble base 5-methylaminomethyl-2-thiouridine (mnm(5)s(2)U) in tRNA. Interacts with IscS and stimulates its cysteine desulfurase activity. Accepts an activated sulfur from IscS, which is then transferred to TusD, and thus determines the direction of sulfur flow from IscS to 2-thiouridine formation. Also appears to be involved in sulfur transfer for the biosynthesis of molybdopterin. This chain is Sulfur carrier protein TusA, found in Buchnera aphidicola subsp. Acyrthosiphon pisum (strain 5A).